The primary structure comprises 120 residues: Prefoldin subunit beta (120 aa).

Belongs to the prefoldin subunit beta family. In terms of assembly, heterohexamer of two alpha and four beta subunits.

The protein resides in the cytoplasm. Molecular chaperone capable of stabilizing a range of proteins. Seems to fulfill an ATP-independent, HSP70-like function in archaeal de novo protein folding. This chain is Prefoldin subunit beta (pfdB), found in Methanopyrus kandleri (strain AV19 / DSM 6324 / JCM 9639 / NBRC 100938).